A 734-amino-acid polypeptide reads, in one-letter code: Transcription factor EMB1444 (734 aa).

The tract at residues 537-566 is disordered; it reads QFPTSLEIPKKNKKRAKPGESSRPRPRDRQ. A Nuclear localization signal motif is present at residues 548–555; sequence NKKRAKPG. In terms of domain architecture, bHLH spans 552–601; it reads AKPGESSRPRPRDRQLIQDRIKELRELVPNGSKCSIDSLLECTIKHMLFL. Over residues 553-566 the composition is skewed to basic and acidic residues; it reads KPGESSRPRPRDRQ.

The protein belongs to the bHLH protein family. LHW subfamily. As to quaternary structure, homodimer.

Its subcellular location is the nucleus. Transcription factor that may regulate root development. The sequence is that of Transcription factor EMB1444 from Arabidopsis thaliana (Mouse-ear cress).